A 236-amino-acid chain; its full sequence is Phosphoribosylaminoimidazole-succinocarboxamide synthase (236 aa).

Belongs to the SAICAR synthetase family.

The catalysed reaction is 5-amino-1-(5-phospho-D-ribosyl)imidazole-4-carboxylate + L-aspartate + ATP = (2S)-2-[5-amino-1-(5-phospho-beta-D-ribosyl)imidazole-4-carboxamido]succinate + ADP + phosphate + 2 H(+). The protein operates within purine metabolism; IMP biosynthesis via de novo pathway; 5-amino-1-(5-phospho-D-ribosyl)imidazole-4-carboxamide from 5-amino-1-(5-phospho-D-ribosyl)imidazole-4-carboxylate: step 1/2. This is Phosphoribosylaminoimidazole-succinocarboxamide synthase from Lysinibacillus sphaericus (strain C3-41).